A 1048-amino-acid chain; its full sequence is Putative structural protein ORF84 (1048 aa).

It belongs to the ascovirus HvAV ORF146 family.

Its subcellular location is the virion. The sequence is that of Putative structural protein ORF84 from Spodoptera frugiperda ascovirus 1a (SfAV-1a).